Consider the following 593-residue polypeptide: Numb-related protein 1 (593 aa).

Disordered stretches follow at residues 1 to 97 (MSAS…WQPD), 235 to 278 (TAQV…NSRS), 331 to 375 (LRQG…FGTQ), and 493 to 581 (MSMS…DPFD). Ser-17 is modified (phosphoserine; by PKC). Residues 27 to 37 (QNSLVSEQQPS) are compositionally biased toward polar residues. A compositionally biased stretch (basic residues) spans 64–74 (RSLRLPKKRRD). Position 65 is a phosphoserine; by PKC (Ser-65). The 154-residue stretch at 102–255 (RTGTCCFNVK…STSSTPPKDI (154 aa)) folds into the PID domain. Composition is skewed to polar residues over residues 236 to 251 (AQVN…SSTP), 261 to 278 (EDNT…NSRS), and 354 to 364 (SLRTVSNNPTE). Residues 493–511 (MSMSPTSPSSDPPSTSSYS) are compositionally biased toward low complexity. Pro residues predominate over residues 516-528 (SGPPPAHAPPPLP). A compositionally biased stretch (polar residues) spans 532–565 (AVSNGSPSIYQQQLQQANSTRNSPAGINWNSSPN).

Interacts with pkc-3. As to expression, expressed in cells comprising the intestine, pharyngeal cells, the anal sphincter and depressor muscles.

The protein localises to the cytoplasm. It localises to the cell cortex. It is found in the cytoskeleton. The protein resides in the membrane. Functionally, involved in the tethering and targeting of pkc-3 to modulate the intracellular distribution of the kinase. The complex formed with pkc-3 complexes are likely to be involved in assembly, maintenance, and/or regulation of protein complexes that execute asymmetric and/or polarized cell functions. This is Numb-related protein 1 from Caenorhabditis elegans.